A 2451-amino-acid polypeptide reads, in one-letter code: Reducing polyketide synthase 8 (2451 aa).

The 423-residue stretch at Asn12 to Ala434 folds into the Ketosynthase family 3 (KS3) domain. Active-site for beta-ketoacyl synthase activity residues include Cys174, His313, and His354. Residues Val538–Met846 enclose the Malonyl-CoA:ACP transacylase (MAT) domain. The segment at His940–Pro1085 is N-terminal hotdog fold. One can recognise a PKS/mFAS DH domain in the interval His940–Ser1254. Residue His974 is the Proton acceptor; for dehydratase activity of the active site. The C-terminal hotdog fold stretch occupies residues Leu1100 to Ser1254. Catalysis depends on Asp1160, which acts as the Proton donor; for dehydratase activity. The tract at residues Leu1294–Gln1590 is methyltransfrase (MT) domain. In terms of domain architecture, Ketoreductase (KR) spans Thr2088–Val2266. The region spanning Asp2366–Ala2451 is the Carrier domain. Ser2404 is modified (O-(pantetheine 4'-phosphoryl)serine).

The cofactor is pantetheine 4'-phosphate.

It functions in the pathway secondary metabolite biosynthesis. In terms of biological role, reducing polyketide synthase; part of the gene cluster that mediates the biosynthesis of fusamarins, isocoumarin derivatives that show moderate cytotoxicity with IC(50) values between 1 and 50 uM. The polyketide synthase FMN1 probably synthesizes two different polyketides, a tetra- and a pentaketide, containinga varying number of double bonds depending on the selective actions of the trans-enoyl reductase FMN2. Chain fusion will presumably be mediated by the KS domain before finally offloading is catalyzed by the alpha/beta hydrolase fold enzyme FMN3. In Fusarium mangiferae (Mango malformation disease fungus), this protein is Reducing polyketide synthase 8.